The chain runs to 154 residues: D-aminoacyl-tRNA deacylase (154 aa).

Residues 142–143 carry the Gly-cisPro motif, important for rejection of L-amino acids motif; it reads GP.

Belongs to the DTD family. In terms of assembly, homodimer.

It localises to the cytoplasm. The enzyme catalyses glycyl-tRNA(Ala) + H2O = tRNA(Ala) + glycine + H(+). It catalyses the reaction a D-aminoacyl-tRNA + H2O = a tRNA + a D-alpha-amino acid + H(+). Its function is as follows. An aminoacyl-tRNA editing enzyme that deacylates mischarged D-aminoacyl-tRNAs. Also deacylates mischarged glycyl-tRNA(Ala), protecting cells against glycine mischarging by AlaRS. Acts via tRNA-based rather than protein-based catalysis; rejects L-amino acids rather than detecting D-amino acids in the active site. By recycling D-aminoacyl-tRNA to D-amino acids and free tRNA molecules, this enzyme counteracts the toxicity associated with the formation of D-aminoacyl-tRNA entities in vivo and helps enforce protein L-homochirality. The sequence is that of D-aminoacyl-tRNA deacylase from Polaromonas naphthalenivorans (strain CJ2).